Reading from the N-terminus, the 266-residue chain is Ras-like protein family member 12 (266 aa).

Residues 27–34 (GRRGAGKS), 74–78 (DTADL), and 134–137 (NKLD) contribute to the GTP site.

It belongs to the small GTPase superfamily. Ras family.

It carries out the reaction GTP + H2O = GDP + phosphate + H(+). The protein is Ras-like protein family member 12 (RASL12) of Bos taurus (Bovine).